A 504-amino-acid polypeptide reads, in one-letter code: MKLLELIEKWAIETPDQTAFVWRDAKITYKQLKEDSDALAHWISSAYPDDRSPIMVYGHMQPEMIINFLGCVKAGHAYIPVDLSIPADRVQRIAENSGAKLLLSAAAVTVTDLPVRIVSEDNLKDIFFTHKGNTPNPEHAVKGDENFYIIYTSGSTGNPKGVQITYNCLVSFTKWAVEDFNLQTGQVFLNQAPFSFDLSVMDIYPSLVTGGTLWAIDKDMIARPKDLFASLEQSDIQVWTSTPSFAEMCLMEASFSESMLPNMKTFLFCGEVLPNEVARKLIERFPNATIMNTYGPTEATVAVTGIHVTEEVLDQYKSLPVGYCKSDCRLLIMKEDGTIAPDGEKGEIVIVGPSVSVGYLGSPELTEKAFTMIDGERAYKTGDAGYVENGLLFYNGRLDFQIKLHGYRMELEEIEHHLRACSYVEGAVIVPIKKGEKYDYLLAVVVPGEHSFEKEFKLTSAIKKELNERLPNYMIPRKFMYQSSIPMTPNGKVDRKKLLSEVTA.

152 to 153 (TS) contributes to the ATP binding site. Residue Asp-197 coordinates D-alanine. 292–297 (NTYGPT) contributes to the ATP binding site. Val-301 is a binding site for D-alanine. Residues Asp-383, 394 to 397 (YNGR), and Lys-492 contribute to the ATP site. Lys-492 lines the D-alanine pocket.

The protein belongs to the ATP-dependent AMP-binding enzyme family. DltA subfamily.

The protein localises to the cytoplasm. The catalysed reaction is holo-[D-alanyl-carrier protein] + D-alanine + ATP = D-alanyl-[D-alanyl-carrier protein] + AMP + diphosphate. The protein operates within cell wall biogenesis; lipoteichoic acid biosynthesis. Catalyzes the first step in the D-alanylation of lipoteichoic acid (LTA), the activation of D-alanine and its transfer onto the D-alanyl carrier protein (Dcp) DltC. In an ATP-dependent two-step reaction, forms a high energy D-alanyl-AMP intermediate, followed by transfer of the D-alanyl residue as a thiol ester to the phosphopantheinyl prosthetic group of the Dcp. D-alanylation of LTA plays an important role in modulating the properties of the cell wall in Gram-positive bacteria, influencing the net charge of the cell wall. The polypeptide is D-alanine--D-alanyl carrier protein ligase (Bacillus cereus (strain G9842)).